We begin with the raw amino-acid sequence, 188 residues long: dCTP deaminase (188 aa).

109 to 114 (KSTYAR) serves as a coordination point for dCTP. E135 functions as the Proton donor/acceptor in the catalytic mechanism. Residues Q154, Y168, and Q178 each contribute to the dCTP site.

The protein belongs to the dCTP deaminase family. In terms of assembly, homotrimer.

The enzyme catalyses dCTP + H2O + H(+) = dUTP + NH4(+). The protein operates within pyrimidine metabolism; dUMP biosynthesis; dUMP from dCTP (dUTP route): step 1/2. Its function is as follows. Catalyzes the deamination of dCTP to dUTP. This is dCTP deaminase from Helicobacter hepaticus (strain ATCC 51449 / 3B1).